The sequence spans 408 residues: PCI domain-containing protein 2 (408 aa).

Position 2 is an N-acetylalanine (Ala2). At Ser45 the chain carries Phosphoserine. Residues 210 to 400 (VTYRYYVGRK…QKLVVSKQNP (191 aa)) form the PCI domain.

This sequence belongs to the CSN12 family. In terms of assembly, component of the nuclear pore complex (NPC)-associated TREX-2 complex (transcription and export complex 2), composed of at least GANP, 2 copies of ENY2, PCID2, SEM1/DSS1, and either centrin CETN2 or centrin CETN3. The TREX-2 complex also associates with ALYREF/ALY and with the nucleoporin NUP153. Interacts with BRCA2. Interacts with SRCAP chromatin remodeling complex component ZNHIT1; the interaction results in inhibition of SRCAP complex activity, preventing the deposition of histone variant H2AZ1/H2A.Z to lymphoid fate regulator genes and restricting lymphoid lineage commitment.

The protein localises to the cytoplasm. The protein resides in the nucleus. Its subcellular location is the nuclear pore complex. Required for B-cell survival through the regulation of the expression of cell-cycle checkpoint MAD2L1 protein during B cell differentiation. As a component of the TREX-2 complex, involved in the export of mRNAs to the cytoplasm through the nuclear pores. Binds and stabilizes BRCA2 and is thus involved in the control of R-loop-associated DNA damage and transcription-associated genomic instability. Blocks the activity of the SRCAP chromatin remodeling complex by interacting with SRCAP complex member ZNHIT1 and inhibiting its interaction with the complex. This prevents the deposition of histone variant H2AZ1/H2A.Z at the nucleosomes of key lymphoid fate regulator genes which suppresses their expression and restricts lymphoid lineage commitment. This chain is PCI domain-containing protein 2 (PCID2), found in Bos taurus (Bovine).